A 299-amino-acid chain; its full sequence is Ubiquinol-cytochrome c reductase complex assembly factor 1 (299 aa).

Belongs to the CBP3 family. As to quaternary structure, interacts with UQCC2. Interacts with UQCC3. Forms a complex, named COMB/coordinator of mitochondrial CYTB biogenesis, composed of UQCC1, UQCC2, UQCC4, UQCC5 and UQCC6; stabilizes nascent cytochrome b/MT-CYB and promotes its membrane insertion. Forms a complex, named COMB/coordinator of mitochondrial CYTB biogenesis, composed of UQCC1, UQCC2, UQCC4, UQCC5 and UQCC6; stabilizes nascent cytochrome b/MT-CYB and promotes its membrane insertion. Forms a complex, named COMA, composed of UQCC1, UQCC2 and UQCC4; activates MT-CYB translation. Forms a complex, named COMC, composed of UQCC1, UQCC2; UQCC3 and UQCC4; mediates MT-CYB hemylation and association with the first nuclear-encoded CIII subunit UQCRQ.

It is found in the mitochondrion inner membrane. It localises to the cytoplasmic vesicle. Functionally, required for the assembly of the ubiquinol-cytochrome c reductase complex (mitochondrial respiratory chain complex III or cytochrome b-c1 complex). Involved in cytochrome b translation and/or stability. This chain is Ubiquinol-cytochrome c reductase complex assembly factor 1 (UQCC1), found in Homo sapiens (Human).